The sequence spans 268 residues: Putative esterase/lipase 2 (268 aa).

The active site involves His-28. His-96 acts as the Charge relay system in catalysis.

It belongs to the lipase/esterase LIP3/BchO family.

In Mycoplasma pneumoniae (strain ATCC 29342 / M129 / Subtype 1) (Mycoplasmoides pneumoniae), this protein is Putative esterase/lipase 2.